The sequence spans 428 residues: Glutamate-1-semialdehyde 2,1-aminomutase (428 aa).

Residue K265 is modified to N6-(pyridoxal phosphate)lysine.

It belongs to the class-III pyridoxal-phosphate-dependent aminotransferase family. HemL subfamily. In terms of assembly, homodimer. The cofactor is pyridoxal 5'-phosphate.

The protein localises to the cytoplasm. The enzyme catalyses (S)-4-amino-5-oxopentanoate = 5-aminolevulinate. It functions in the pathway porphyrin-containing compound metabolism; protoporphyrin-IX biosynthesis; 5-aminolevulinate from L-glutamyl-tRNA(Glu): step 2/2. The chain is Glutamate-1-semialdehyde 2,1-aminomutase from Aeromonas hydrophila subsp. hydrophila (strain ATCC 7966 / DSM 30187 / BCRC 13018 / CCUG 14551 / JCM 1027 / KCTC 2358 / NCIMB 9240 / NCTC 8049).